We begin with the raw amino-acid sequence, 1200 residues long: NACHT, LRR and PYD domains-containing protein 5 (1200 aa).

The 92-residue stretch at 57 to 148 (SLTFSSYGLQ…SEKARDDMKR (92 aa)) folds into the Pyrin domain. The segment covering 142 to 152 (ARDDMKRHSPE) has biased composition (basic and acidic residues). The disordered stretch occupies residues 142–232 (ARDDMKRHSP…TEEQGHGGDT (91 aa)). Positions 173 to 182 (QAVQQDSATA) are enriched in polar residues. 2 stretches are compositionally biased toward low complexity: residues 192-202 (QAMEQEGATAA) and 209-221 (ISQAMEQEGATAA). The NACHT domain occupies 280–602 (RTVVLHGKSG…ALYYVLEGLE (323 aa)). Position 286–293 (286–293 (GKSGIGKS)) interacts with ATP. LRR repeat units follow at residues 704 to 727 (LNSFQEVWLPINQNLDLIASSFCL), 730 to 753 (CPYLRKIRVDVKGIFPRDESAEAC), 780 to 803 (HPHLRQLDLGSSILTERAMKTLCA), 809 to 832 (TCKIQTLMFRNAQITPGVQHLWRI), 836 to 863 (NRNLRSLNLGGTHLKEEDVRMACEALKH), 865 to 892 (KCLLESLRLDCCGLTHACYLKISQILTT), 893 to 916 (SPSLKSLSLAGNKVTDQGVMPLSD), 950 to 973 (NRSLTHLCLSNNSLGNEGVNLLCR), 979 to 1002 (HCSLQRLMLNQCHLDTAGCGFLAL), 1007 to 1034 (NSWLTHLSLSMNPVEDNGVKLLCEVMRE), 1036 to 1059 (SCHLQDLELVKCHLTAACCESLSC), 1064 to 1092 (SRHLKSLDLTDNALGDGGVAALCEGLKQK), and 1121 to 1142 (NRHLTSLNLVQNNFSPKGMMKL).

This sequence belongs to the NLRP family. Component of the subcortical maternal complex (SCMC), at least composed of NLRP5, KHDC3, OOEP, and TLE6 isoform 1. Within the complex, interacts with OOEP, KHDC3L and TLE6. The SCMC may facilitate translocation of its components between the nuclear and cytoplasmic compartments. As part of the SCMC interacts with the SCMC-associated protein ZBED3. As part of the SCMC interacts with the SCMC-associated protein CFL1/Cofilin-1. Interacts with PRKCE. Interacts with TUBB3 at cytoskeleton microtubules. Post-translationally, phosphorylated by PRKCE. Expressed in cumulus cells (at protein level). Highly abundant in oocytes and early embryos, however poorly expressed in somatic tissues such as the liver and spinal cord.

It is found in the cytoplasm. It localises to the cytoplasmic vesicle. The protein resides in the secretory vesicle. Its subcellular location is the cortical granule. The protein localises to the mitochondrion. It is found in the nucleus. It localises to the nucleolus. The protein resides in the golgi apparatus. Its function is as follows. Component of the subcortical maternal complex (SCMC), a multiprotein complex that plays a key role in early embryonic development. The SCMC complex is a structural constituent of cytoplasmic lattices, which consist in fibrous structures found in the cytoplasm of oocytes and preimplantation embryos. They are required to store maternal proteins critical for embryonic development, such as proteins that control epigenetic reprogramming of the preimplantation embryo, and prevent their degradation or activation. Required for the localization of cortical granules to the cortex of oocytes, via association with the cortical actin scaffold. Required for cortical actin clearance prior to oocyte exocytosis and prevention of polyspermy. Involved in regulating post-fertilization Ca(2+) release and endoplasmic reticulum storage (ER) storage via regulation of cellular localization. May be involved in the localization of mitochondria to the cytoplasm and perinuclear region in oocytes and early stage embryos, independent of its role in CPL formation. This chain is NACHT, LRR and PYD domains-containing protein 5 (NLRP5), found in Homo sapiens (Human).